A 260-amino-acid chain; its full sequence is Flap endonuclease Xni (260 aa).

Asp104 provides a ligand contact to Mg(2+). The 5'-3' exonuclease domain occupies 160–250 (VSPQQLTDYW…NGNLQQLRLP (91 aa)). Leu171, Ala172, Pro180, Val182, and Ile185 together coordinate K(+). Residues 184-189 (GIGPKS) are interaction with DNA.

It belongs to the Xni family. It depends on Mg(2+) as a cofactor. Requires K(+) as cofactor.

Functionally, has flap endonuclease activity. During DNA replication, flap endonucleases cleave the 5'-overhanging flap structure that is generated by displacement synthesis when DNA polymerase encounters the 5'-end of a downstream Okazaki fragment. The polypeptide is Flap endonuclease Xni (Pectobacterium atrosepticum (strain SCRI 1043 / ATCC BAA-672) (Erwinia carotovora subsp. atroseptica)).